The primary structure comprises 312 residues: Ribosomal RNA small subunit methyltransferase H (312 aa).

Residues 36–38, Asp-55, Phe-81, Asp-103, and Gln-110 each bind S-adenosyl-L-methionine; that span reads GGH.

This sequence belongs to the methyltransferase superfamily. RsmH family.

The protein resides in the cytoplasm. It catalyses the reaction cytidine(1402) in 16S rRNA + S-adenosyl-L-methionine = N(4)-methylcytidine(1402) in 16S rRNA + S-adenosyl-L-homocysteine + H(+). Specifically methylates the N4 position of cytidine in position 1402 (C1402) of 16S rRNA. The polypeptide is Ribosomal RNA small subunit methyltransferase H (Marinomonas sp. (strain MWYL1)).